Here is a 147-residue protein sequence, read N- to C-terminus: Prefoldin subunit alpha (147 aa).

This sequence belongs to the prefoldin alpha subunit family. As to quaternary structure, heterohexamer of two alpha and four beta subunits.

It is found in the cytoplasm. Molecular chaperone capable of stabilizing a range of proteins. Seems to fulfill an ATP-independent, HSP70-like function in archaeal de novo protein folding. This is Prefoldin subunit alpha from Thermococcus onnurineus (strain NA1).